The primary structure comprises 294 residues: Shell matrix protein (294 aa).

Component of the organic matrix of calcified shell layers like nacre and prisms.

The protein localises to the secreted. The sequence is that of Shell matrix protein from Mytilus californianus (California mussel).